Consider the following 543-residue polypeptide: EH domain-containing protein 2 (543 aa).

Phosphoserine is present on residues Ser3 and Ser44. A Dynamin-type G domain is found at Phe55–Pro286. The segment at Gly65–Thr72 is G1 motif. Position 65–72 (Gly65–Thr72) interacts with ATP. Residues Glu91–Pro92 are G2 motif. Residues Asp153–Gly156 are G3 motif. Residues Asn219–Asp222 form a G4 motif region. Position 220 (Lys220) interacts with ATP. Val243 is a region of interest (G5 motif). Trp258 is a binding site for ATP. The segment at Ser320–Ala340 is mediates membrane-binding. A phosphoserine mark is found at Ser438, Ser468, Ser470, Ser484, and Ser493. The 89-residue stretch at Asp449–Arg537 folds into the EH domain. In terms of domain architecture, EF-hand spans Leu481–Lys516. Residues Asp494, Asp496, Asp498, Met500, and Glu505 each coordinate Ca(2+). The segment at Gly521–Glu543 is disordered. Residues Ser534–Glu543 show a composition bias toward basic residues.

Belongs to the TRAFAC class dynamin-like GTPase superfamily. Dynamin/Fzo/YdjA family. EHD subfamily. Homodimer and homooligomer. Interacts with EHD1. May also interact with EHD3 and EHD4. Interacts with MYOF. Interacts with EHBP1. Interacts with FER1L5 (via second C2 domain). Interacts with CAV1 in a cholesterol-dependent manner. Interacts (via EH domain) with PACSIN2 (via NPF motifs); this interaction probably stabilizes the caveolae.

It localises to the cell membrane. It is found in the membrane. The protein localises to the caveola. Its subcellular location is the endosome membrane. The protein resides in the cytoplasm. It localises to the cytosol. The very low intrinsic ATPase activity is increased upon interaction with liposomes. ATP- and membrane-binding protein that controls membrane reorganization/tubulation upon ATP hydrolysis. Plays a role in membrane trafficking between the plasma membrane and endosomes. Important for the internalization of GLUT4. Required for fusion of myoblasts to skeletal muscle myotubes. Required for normal translocation of FER1L5 to the plasma membrane. Regulates the equilibrium between cell surface-associated and cell surface-dissociated caveolae by constraining caveolae at the cell membrane. This chain is EH domain-containing protein 2, found in Rattus norvegicus (Rat).